The chain runs to 488 residues: Putative serine carboxypeptidase-like 30 (488 aa).

The first 28 residues, 1–28 (MDNHTKSFSSLLISLWFTALLILVEMVS), serve as a signal peptide directing secretion. 3 disulfide bridges follow: Cys-99–Cys-368, Cys-262–Cys-275, and Cys-299–Cys-336. Asn-150 is a glycosylation site (N-linked (GlcNAc...) asparagine). Ser-192 is a catalytic residue. The N-linked (GlcNAc...) asparagine glycan is linked to Asn-263. N-linked (GlcNAc...) asparagine glycans are attached at residues Asn-364 and Asn-375. Residues Asp-405 and His-457 contribute to the active site.

Belongs to the peptidase S10 family. As to expression, expression not detected.

It localises to the secreted. Probable carboxypeptidase. The chain is Putative serine carboxypeptidase-like 30 (SCPL30) from Arabidopsis thaliana (Mouse-ear cress).